The chain runs to 88 residues: HssA/B-like protein 61 (88 aa).

The protein belongs to the hssA/B family.

This Dictyostelium discoideum (Social amoeba) protein is HssA/B-like protein 61 (hssl61).